A 141-amino-acid chain; its full sequence is Nucleoside diphosphate kinase (141 aa).

K11, F59, R87, T93, R104, and N114 together coordinate ATP. The active-site Pros-phosphohistidine intermediate is H117.

This sequence belongs to the NDK family. As to quaternary structure, homotetramer. Mg(2+) serves as cofactor.

The protein localises to the cytoplasm. The enzyme catalyses a 2'-deoxyribonucleoside 5'-diphosphate + ATP = a 2'-deoxyribonucleoside 5'-triphosphate + ADP. It carries out the reaction a ribonucleoside 5'-diphosphate + ATP = a ribonucleoside 5'-triphosphate + ADP. Major role in the synthesis of nucleoside triphosphates other than ATP. The ATP gamma phosphate is transferred to the NDP beta phosphate via a ping-pong mechanism, using a phosphorylated active-site intermediate. This chain is Nucleoside diphosphate kinase, found in Xylella fastidiosa (strain 9a5c).